A 412-amino-acid polypeptide reads, in one-letter code: Imidazolonepropionase (412 aa).

Fe(3+) is bound by residues His-76 and His-78. Positions 76 and 78 each coordinate Zn(2+). 4-imidazolone-5-propanoate-binding residues include Arg-85, Tyr-148, and His-181. Residue Tyr-148 participates in N-formimidoyl-L-glutamate binding. A Fe(3+)-binding site is contributed by His-242. Residue His-242 coordinates Zn(2+). A 4-imidazolone-5-propanoate-binding site is contributed by Glu-245. Residue Asp-317 participates in Fe(3+) binding. Asp-317 provides a ligand contact to Zn(2+). The N-formimidoyl-L-glutamate site is built by Asn-319 and Gly-321. 4-imidazolone-5-propanoate is bound at residue Ser-322.

It belongs to the metallo-dependent hydrolases superfamily. HutI family. Requires Zn(2+) as cofactor. Fe(3+) is required as a cofactor.

The protein localises to the cytoplasm. It catalyses the reaction 4-imidazolone-5-propanoate + H2O = N-formimidoyl-L-glutamate. It participates in amino-acid degradation; L-histidine degradation into L-glutamate; N-formimidoyl-L-glutamate from L-histidine: step 3/3. Functionally, catalyzes the hydrolytic cleavage of the carbon-nitrogen bond in imidazolone-5-propanoate to yield N-formimidoyl-L-glutamate. It is the third step in the universal histidine degradation pathway. This chain is Imidazolonepropionase, found in Staphylococcus saprophyticus subsp. saprophyticus (strain ATCC 15305 / DSM 20229 / NCIMB 8711 / NCTC 7292 / S-41).